Here is a 430-residue protein sequence, read N- to C-terminus: MANVAIVGAQWGDEGKGKVVDIYTEYADDIVRFQGGNNAGHTLVVGNEKVVLHLIPSGILHEGKRCIIGNGVVLDPEVFIKEIVKLKESGRLTDDSCLLLSESLHIIMPYHKRIDIAREARSGDRKIGTTGRGIGPCYEDKIGRRGIRLMDLLNRDVFARRLKEFLVEKNFLLEKMLGEAPCDYDQILEEYSGYAEVLRAYMADTALIINNDLQAGKKILFEGAQGTLLDVDFGTYPFVTSSSTCAGGVCTGSGVGPRHIHEIIGISKAYVTRVGSGPFPTELFDADGDRLRDAGGEFGSTTGRPRRCGWFDAMVIRYAVRTNGLTGIALTKLDVLSGFDSIKICTGYTLDGKALETLPSAPEAFENCQPVYEELPGWNADISGAKSFEELPDSARAYVKRLEELAGCPIVLVSVGARRDQTIILRNPFL.

Residues 12-18 (GDEGKGK) and 40-42 (GHT) contribute to the GTP site. D13 (proton acceptor) is an active-site residue. Mg(2+)-binding residues include D13 and G40. IMP is bound by residues 13–16 (DEGK), 38–41 (NAGH), T130, R144, Q225, T240, and R304. Catalysis depends on H41, which acts as the Proton donor. Residue 300-306 (STTGRPR) coordinates substrate. Residues R306, 332–334 (KLD), and 414–416 (SVG) contribute to the GTP site.

Belongs to the adenylosuccinate synthetase family. As to quaternary structure, homodimer. Mg(2+) serves as cofactor.

The protein resides in the cytoplasm. The catalysed reaction is IMP + L-aspartate + GTP = N(6)-(1,2-dicarboxyethyl)-AMP + GDP + phosphate + 2 H(+). Its pathway is purine metabolism; AMP biosynthesis via de novo pathway; AMP from IMP: step 1/2. Functionally, plays an important role in the de novo pathway of purine nucleotide biosynthesis. Catalyzes the first committed step in the biosynthesis of AMP from IMP. The polypeptide is Adenylosuccinate synthetase (Pelobacter propionicus (strain DSM 2379 / NBRC 103807 / OttBd1)).